The primary structure comprises 305 residues: Tyrosine recombinase XerD (305 aa).

The Core-binding (CB) domain maps to 2–87 (SQGEAWADAF…AVRQFYRFVL (86 aa)). A Tyr recombinase domain is found at 108 to 295 (PLPKVLERDE…AGEHLAHIVQ (188 aa)). Residues R149, K173, H247, R250, and H273 contribute to the active site. Y282 acts as the O-(3'-phospho-DNA)-tyrosine intermediate in catalysis.

Belongs to the 'phage' integrase family. XerD subfamily. Forms a cyclic heterotetrameric complex composed of two molecules of XerC and two molecules of XerD.

It localises to the cytoplasm. In terms of biological role, site-specific tyrosine recombinase, which acts by catalyzing the cutting and rejoining of the recombining DNA molecules. The XerC-XerD complex is essential to convert dimers of the bacterial chromosome into monomers to permit their segregation at cell division. It also contributes to the segregational stability of plasmids. This Caulobacter vibrioides (strain ATCC 19089 / CIP 103742 / CB 15) (Caulobacter crescentus) protein is Tyrosine recombinase XerD.